The following is a 291-amino-acid chain: Probable 2-(5''-triphosphoribosyl)-3'-dephosphocoenzyme-A synthase (291 aa).

This sequence belongs to the CitG/MdcB family.

The enzyme catalyses 3'-dephospho-CoA + ATP = 2'-(5''-triphospho-alpha-D-ribosyl)-3'-dephospho-CoA + adenine. Its function is as follows. Involved in the formation of 2-(5''-phosphoribosyl)-3'-dephosphocoenzyme-A, the prosthetic group of the acyl-carrier protein of the malonate decarboxylase. This is Probable 2-(5''-triphosphoribosyl)-3'-dephosphocoenzyme-A synthase from Pseudomonas syringae pv. syringae (strain B728a).